Reading from the N-terminus, the 1239-residue chain is Protein strawberry notch homolog 1 (1239 aa).

The interval 684–837 is disordered; it reads AQSNNNSPRD…SANSNTNSSF (154 aa). Residues 694-713 show a composition bias toward basic and acidic residues; it reads SPCKENKIKKRKGEEVSREA. Residues 728 to 744 are compositionally biased toward acidic residues; that stretch reads DESESESDASDNEESDN. Residues 778-790 are compositionally biased toward basic residues; that stretch reads KEHKKVKEKKKKK. Low complexity predominate over residues 814 to 837; it reads FTSTVGTTTSSTNASANSNTNSSF. Residues 838–866 adopt a coiled-coil conformation; that stretch reads VTSQDAVERAQQMKKELLDKLEKLAEDLP.

It belongs to the SBNO family.

Its subcellular location is the nucleus. Functionally, plays a crucial role in the regulation of neural stem cells (NSCs) proliferation. Enhances the phosphorylation of GSK3B through the PI3K-Akt signaling pathway, thereby upregulating the Wnt/beta-catenin signaling pathway and promoting the proliferation of NSCs. The chain is Protein strawberry notch homolog 1 (SBNO1) from Gallus gallus (Chicken).